Consider the following 221-residue polypeptide: Chalcone--flavanone isomerase 2 (221 aa).

The substrate site is built by T50, N115, and S192.

It belongs to the chalcone isomerase family.

The enzyme catalyses a chalcone = a flavanone.. It participates in secondary metabolite biosynthesis; flavonoid biosynthesis. Functionally, catalyzes the intramolecular cyclization of bicyclic chalcones into tricyclic (S)-flavanones. Responsible for the isomerization of 4,2',4',6'-tetrahydroxychalcone (also termed chalcone) into naringenin. The protein is Chalcone--flavanone isomerase 2 (CHI2) of Lotus japonicus (Lotus corniculatus var. japonicus).